Consider the following 195-residue polypeptide: dCTP deaminase (195 aa).

DCTP-binding positions include arginine 105 to arginine 110, aspartate 123, threonine 131 to glutamate 133, glutamine 152, tyrosine 166, lysine 173, and glutamine 177. Catalysis depends on glutamate 133, which acts as the Proton donor/acceptor. Positions lysine 159–glutamine 195 are disordered. Positions serine 160–serine 172 are enriched in basic and acidic residues. Polar residues predominate over residues tyrosine 174–arginine 184. Basic and acidic residues predominate over residues glutamine 186–glutamine 195.

This sequence belongs to the dCTP deaminase family. As to quaternary structure, homotrimer.

The catalysed reaction is dCTP + H2O + H(+) = dUTP + NH4(+). It participates in pyrimidine metabolism; dUMP biosynthesis; dUMP from dCTP (dUTP route): step 1/2. Catalyzes the deamination of dCTP to dUTP. In Natronomonas pharaonis (strain ATCC 35678 / DSM 2160 / CIP 103997 / JCM 8858 / NBRC 14720 / NCIMB 2260 / Gabara) (Halobacterium pharaonis), this protein is dCTP deaminase.